The sequence spans 372 residues: Glutamate 5-kinase (372 aa).

Lys14 is a binding site for ATP. Residues Ser54, Asp141, and Asn153 each contribute to the substrate site. Residue 173-174 coordinates ATP; it reads TD. Residues 280 to 358 form the PUA domain; the sequence is RGHVVIDAGA…GEIESVLGYM (79 aa).

The protein belongs to the glutamate 5-kinase family.

It localises to the cytoplasm. It carries out the reaction L-glutamate + ATP = L-glutamyl 5-phosphate + ADP. It functions in the pathway amino-acid biosynthesis; L-proline biosynthesis; L-glutamate 5-semialdehyde from L-glutamate: step 1/2. Functionally, catalyzes the transfer of a phosphate group to glutamate to form L-glutamate 5-phosphate. This is Glutamate 5-kinase from Burkholderia multivorans (strain ATCC 17616 / 249).